The following is a 163-amino-acid chain: Inorganic pyrophosphatase (163 aa).

Residue glutamate 9 participates in Mg(2+) binding. Residues lysine 17, arginine 31, and tyrosine 43 each coordinate substrate. Mg(2+) contacts are provided by aspartate 53, aspartate 58, aspartate 85, and aspartate 90. The active-site Proton acceptor is the aspartate 90. Tyrosine 127 lines the substrate pocket.

Belongs to the PPase family. In terms of assembly, homohexamer. Mg(2+) is required as a cofactor.

It localises to the cytoplasm. It carries out the reaction diphosphate + H2O = 2 phosphate + H(+). In terms of biological role, catalyzes the hydrolysis of inorganic pyrophosphate (PPi) forming two phosphate ions. The polypeptide is Inorganic pyrophosphatase (Leifsonia xyli subsp. xyli (strain CTCB07)).